Here is a 448-residue protein sequence, read N- to C-terminus: StAR-related lipid transfer protein 3 (448 aa).

The MENTAL domain maps to Phe47–Ser219. 4 helical membrane-spanning segments follow: residues Thr53–Leu73, Phe96–Ala116, Trp122–Leu142, and Ala150–Leu170. Positions Gln208–Glu214 match the FFAT motif. Residues Ala232 to Val445 enclose the START domain.

It belongs to the STARD3 family. In terms of assembly, homodimer. Phosphorylated. Phosphorylation allows the tethering of two membranes that participates in the formation of ER-endosome contacts. Phosphorylation of FFAT motif drives membrane tethering between the endoplasmic reticulum and late endosomes that in turn allows the efficient transport of sterol mediated by the START domain.

It localises to the late endosome membrane. The catalysed reaction is cholesterol(in) = cholesterol(out). Sterol-binding protein that mediates cholesterol transport from the endoplasmic reticulum to endosomes. The sterol transport mechanism is triggered by phosphorylation of FFAT motif that leads to membrane tethering between the endoplasmic reticulum and late endosomes. Acts as a lipid transfer protein that redirects sterol to the endosome at the expense of the cell membrane and favors membrane formation inside endosomes. In Danio rerio (Zebrafish), this protein is StAR-related lipid transfer protein 3.